We begin with the raw amino-acid sequence, 120 residues long: MTLNQILKFKRKKSVKKKKTPALLSSPQKKGICIKVYTTTPKKPNSALRKVCRVKLSNKNEITAYIPGEGHNLQEHSNVLVRGGRVKDLPGVKYHIIRNVYDLSGVINRKTSRSKYGKKK.

Aspartate 88 is modified (3-methylthioaspartic acid).

Belongs to the universal ribosomal protein uS12 family. As to quaternary structure, part of the 30S ribosomal subunit. Contacts proteins S8 and S17. May interact with IF1 in the 30S initiation complex.

In terms of biological role, with S4 and S5 plays an important role in translational accuracy. Functionally, interacts with and stabilizes bases of the 16S rRNA that are involved in tRNA selection in the A site and with the mRNA backbone. Located at the interface of the 30S and 50S subunits, it traverses the body of the 30S subunit contacting proteins on the other side and probably holding the rRNA structure together. The combined cluster of proteins S8, S12 and S17 appears to hold together the shoulder and platform of the 30S subunit. The polypeptide is Small ribosomal subunit protein uS12 (Carsonella ruddii (strain PV)).